A 400-amino-acid polypeptide reads, in one-letter code: Forkhead box protein A4-B (400 aa).

Positions 119–213 form a DNA-binding region, fork-head; sequence KPPYSYISLI…ENGCYLRRQK (95 aa). Over residues 218–234 the composition is skewed to basic and acidic residues; that stretch reads ERSKSGEGERKGNKPGD. The disordered stretch occupies residues 218–290; sequence ERSKSGEGER…VGFSPTSEQA (73 aa). Polar residues-rich tracts occupy residues 249–258 and 267–277; these read DCSSSRSPQA and STGSSIHQATG.

As to expression, primarily expressed in the dorsal blastopore lip (Spemann organizer) of early gastrulae. At later stages, expressed in the dorsal mesoderm and the neural floor plate. In the dorsal mesoderm, expressed in the notochord but not in the presomitic mesoderm. Also expressed in the mid-brain area.

It is found in the nucleus. In terms of biological role, transcriptional repressor involved in embryonic nervous system development. Plays a role in the induction and patterning of the anterior-posterior neural axis. Involved in the establishment of floor plate differentiation from neural plate cells during gastrulation. Binds the anf1 promoter sequence to restrict expression of anf1 to the anterior of the neural plate, thereby patterning the forebrain. Can bind to the HNF-3-alpha DNA target sequence. Cooperates with t/bra in a dose-dependent manner to specify dorsal mesoderm formation, including notochord. May be involved in the dorso-ventral patterning of the mesoderm. Binds to DNA via the target sequence 5'-[GA]TAAA[TC]A-3', with 5'-GTAAATA-3' being the preferred binding site. This chain is Forkhead box protein A4-B (foxa4-b), found in Xenopus laevis (African clawed frog).